Here is a 226-residue protein sequence, read N- to C-terminus: AN1-type zinc finger protein 3 homolog (226 aa).

An A20-type zinc finger spans residues 12–44 (PSLPPRCPCGFWGSSKTMNLCSKCFADFQKKQP). C18, C20, C32, and C35 together coordinate Zn(2+). Positions 42–149 (KQPDEDTAPS…DRPDNSSRSK (108 aa)) are disordered. 3 stretches are compositionally biased toward polar residues: residues 49–59 (APSTSSSQSDL), 67–92 (DNGNTSIPTPTVNPTQQLPTELNVDS), and 105–114 (AHVSLTTPSK). The span at 134-146 (RLLDSGDRPDNSS) shows a compositional bias: basic and acidic residues. The segment at 150–199 (QKSRRRCFRCQIKLELVQQELGSCRCGYVFCMLHRLPEQHDCTFDHMGRG) adopts an AN1-type zinc-finger fold. Zn(2+) is bound by residues C156, C159, C173, C175, C180, H183, H189, and C191.

This chain is AN1-type zinc finger protein 3 homolog (zfand3), found in Xenopus laevis (African clawed frog).